The chain runs to 208 residues: Holliday junction branch migration complex subunit RuvA (208 aa).

Positions 1-63 (MIGMLTGRVE…QDSVTLYGFL (63 aa)) are domain I. The domain II stretch occupies residues 64–142 (DRDSKRVFLQ…LNQSDDASAG (79 aa)). A flexible linker region spans residues 143 to 151 (NAPYQPTVD). The domain III stretch occupies residues 151 to 208 (DAGVEQVVEGLVSLGWRQQDAQRAVNEACAENDVPMPLASDDAPRVLRLALARMDRGR).

It belongs to the RuvA family. Homotetramer. Forms an RuvA(8)-RuvB(12)-Holliday junction (HJ) complex. HJ DNA is sandwiched between 2 RuvA tetramers; dsDNA enters through RuvA and exits via RuvB. An RuvB hexamer assembles on each DNA strand where it exits the tetramer. Each RuvB hexamer is contacted by two RuvA subunits (via domain III) on 2 adjacent RuvB subunits; this complex drives branch migration. In the full resolvosome a probable DNA-RuvA(4)-RuvB(12)-RuvC(2) complex forms which resolves the HJ.

It localises to the cytoplasm. In terms of biological role, the RuvA-RuvB-RuvC complex processes Holliday junction (HJ) DNA during genetic recombination and DNA repair, while the RuvA-RuvB complex plays an important role in the rescue of blocked DNA replication forks via replication fork reversal (RFR). RuvA specifically binds to HJ cruciform DNA, conferring on it an open structure. The RuvB hexamer acts as an ATP-dependent pump, pulling dsDNA into and through the RuvAB complex. HJ branch migration allows RuvC to scan DNA until it finds its consensus sequence, where it cleaves and resolves the cruciform DNA. The polypeptide is Holliday junction branch migration complex subunit RuvA (Bifidobacterium longum subsp. infantis (strain ATCC 15697 / DSM 20088 / JCM 1222 / NCTC 11817 / S12)).